The primary structure comprises 143 residues: Large ribosomal subunit protein uL11 (143 aa).

This sequence belongs to the universal ribosomal protein uL11 family. Part of the ribosomal stalk of the 50S ribosomal subunit. Interacts with L10 and the large rRNA to form the base of the stalk. L10 forms an elongated spine to which L12 dimers bind in a sequential fashion forming a multimeric L10(L12)X complex. Post-translationally, one or more lysine residues are methylated.

In terms of biological role, forms part of the ribosomal stalk which helps the ribosome interact with GTP-bound translation factors. This Bordetella pertussis (strain Tohama I / ATCC BAA-589 / NCTC 13251) protein is Large ribosomal subunit protein uL11.